The following is a 31-amino-acid chain: Sarcolipin (31 aa).

At 1 to 7 (MERSTQE) the chain is on the cytoplasmic side. A helical membrane pass occupies residues 8–26 (LFINFTVVLITVLLMWLLV). The Lumenal segment spans residues 27 to 31 (RSYQY).

This sequence belongs to the sarcolipin family. Homooligomer. Can also form heterooligomers with other sarcoplasmic/endoplasmic reticulum calcium ATPase (SERCA) regulators ARLN, ERLN, PLN and STRIT1/DWORF. Monomer. Interacts with calcium ATPase ATP2A1/SERCA1. Interacts as a monomer with ATP2A2/SERCA2; the interaction decreases ATP2A2 Ca(2+) affinity. Interacts with VMP1; VMP1 competes with PLN and SLN to prevent them from forming an inhibitory complex with ATP2A2.

It is found in the sarcoplasmic reticulum membrane. Its subcellular location is the endoplasmic reticulum membrane. Functionally, reversibly inhibits the activity of ATP2A1/SERCA1 and ATP2A2/SERCA2 in sarcoplasmic reticulum by decreasing the apparent affinity of the ATPase for Ca(2+). Also inhibits the activity of ATP2A3/SERCA3. Modulates calcium re-uptake during muscle relaxation and plays an important role in calcium homeostasis in muscle. Required for muscle-based, non-shivering thermogenesis. This Rattus norvegicus (Rat) protein is Sarcolipin (Sln).